The sequence spans 381 residues: Phospholipid scramblase family protein C343.06c (381 aa).

Positions 336–369 (QEILKNDQETTPSTNDSSSETKSPFLSDADLDQQ) are disordered. Residues 344–359 (ETTPSTNDSSSETKSP) show a composition bias toward polar residues.

Belongs to the phospholipid scramblase family.

Its subcellular location is the mitochondrion. This Schizosaccharomyces pombe (strain 972 / ATCC 24843) (Fission yeast) protein is Phospholipid scramblase family protein C343.06c.